Reading from the N-terminus, the 49-residue chain is Delta-actitoxin-Axm1b (49 aa).

The tract at residues G1–D7 is well-structured region. Intrachain disulfides connect C4–C46, C6–C36, and C29–C47. The arg-14 loop (non-well-structured region) stretch occupies residues S8 to T17. The segment at L18–K49 is well-structured region.

The protein belongs to the sea anemone sodium channel inhibitory toxin family. Type I subfamily.

Its subcellular location is the secreted. It localises to the nematocyst. Its function is as follows. Binds specifically to voltage-gated sodium channels (Nav) (site 3), thereby delaying their inactivation. This toxin has the highest affinity of all anemone toxins for the mammalian sodium channel, whereas its paralog Anthopleurin-A retains the greatest capacity to discriminate between cardiac (Nav1.5/SCN5A) and neuronal sodium channels. When tested electrophysiologically, this toxin exhibits a high affinity for multiple sodium channels with a 50-fold preference for rat cardiac (Nav1.5/SCN5A) over neuronal channels (0.1 nM versus 5 nM). When tested by ion flux, the affinities are similar and appear to have higher affinity (9 nM versus 22 nM). The residue Lys-37 of this toxin has been shown to interact with channel Nav1.5 (residue Asp-1612 in rat and Asp-1610 in human), which is located in the DIV S3-S4 linker (corresponding to channel site 3). Selectively modifies sodium channel inactivation from the open state with little effect on channel activation or on inactivation from closed states. Does not display phospholipid-binding activities, suggesting that the domain IV S3-S4 linker is located at the extracellular surface and not buried in the phospholipid bilayer. The polypeptide is Delta-actitoxin-Axm1b (Anthopleura xanthogrammica (Giant green sea anemone)).